The primary structure comprises 433 residues: GTPase Obg (433 aa).

Residues 4 to 162 (EDFVDRVTIF…RWLELELKLL (159 aa)) form the Obg domain. The region spanning 163–334 (ADAGLIGFPN…LKQKIFEIVG (172 aa)) is the OBG-type G domain. Residues 169-176 (GFPNVGKS), 194-198 (FTTLV), 216-219 (DIPG), 286-289 (NKID), and 315-317 (SAL) each bind GTP. The Mg(2+) site is built by Ser-176 and Thr-196. Residues 356–433 (TKIEERFDFE…IGQYSFEYKE (78 aa)) form the OCT domain.

This sequence belongs to the TRAFAC class OBG-HflX-like GTPase superfamily. OBG GTPase family. Monomer. Requires Mg(2+) as cofactor.

It localises to the cytoplasm. In terms of biological role, an essential GTPase which binds GTP, GDP and possibly (p)ppGpp with moderate affinity, with high nucleotide exchange rates and a fairly low GTP hydrolysis rate. Plays a role in control of the cell cycle, stress response, ribosome biogenesis and in those bacteria that undergo differentiation, in morphogenesis control. This Pseudothermotoga lettingae (strain ATCC BAA-301 / DSM 14385 / NBRC 107922 / TMO) (Thermotoga lettingae) protein is GTPase Obg.